We begin with the raw amino-acid sequence, 518 residues long: NADH-quinone oxidoreductase subunit N (518 aa).

14 consecutive transmembrane segments (helical) span residues 18 to 38 (FRPE…DLVF), 45 to 65 (VALL…LLAI), 82 to 102 (AFAI…VIIA), 113 to 133 (IGQF…MASA), 136 to 156 (LLMV…LAGF), 171 to 191 (VIYG…LYGL), 220 to 240 (VALV…VAAV), 254 to 274 (PTPF…ALAI), 295 to 315 (LAGI…MTLG), 328 to 348 (LLAY…SAVS), 355 to 375 (VMIY…VVIL), 399 to 419 (AVAF…AGFV), 439 to 459 (WYAW…YYYV), and 486 to 506 (VMLG…TPMV).

This sequence belongs to the complex I subunit 2 family. As to quaternary structure, NDH-1 is composed of 14 different subunits. Subunits NuoA, H, J, K, L, M, N constitute the membrane sector of the complex.

It localises to the cell inner membrane. It carries out the reaction a quinone + NADH + 5 H(+)(in) = a quinol + NAD(+) + 4 H(+)(out). Functionally, NDH-1 shuttles electrons from NADH, via FMN and iron-sulfur (Fe-S) centers, to quinones in the respiratory chain. The immediate electron acceptor for the enzyme in this species is believed to be ubiquinone. Couples the redox reaction to proton translocation (for every two electrons transferred, four hydrogen ions are translocated across the cytoplasmic membrane), and thus conserves the redox energy in a proton gradient. This Anaeromyxobacter sp. (strain Fw109-5) protein is NADH-quinone oxidoreductase subunit N.